Reading from the N-terminus, the 175-residue chain is Methylmalonyl-CoA epimerase, mitochondrial (175 aa).

The N-terminal 35 residues, 1 to 35 (MARVLKVAAASAAGLFPRLRTPVSTVRTSASLSSH), are a transit peptide targeting the mitochondrion. The 130-residue stretch at 46-175 (RLNHVAVAVP…GGVLVELEQA (130 aa)) folds into the VOC domain. Residue His-49 coordinates Co(2+). Lys-113 carries the post-translational modification N6-succinyllysine. Co(2+) is bound at residue His-121. Lys-149 bears the N6-acetyllysine; alternate mark. Position 149 is an N6-succinyllysine; alternate (Lys-149). Glu-171 lines the Co(2+) pocket.

Belongs to the methylmalonyl-CoA epimerase family.

The protein resides in the mitochondrion. It carries out the reaction (R)-methylmalonyl-CoA = (S)-methylmalonyl-CoA. Functionally, methylmalonyl-CoA epimerase involved in propionyl-CoA metabolism. This chain is Methylmalonyl-CoA epimerase, mitochondrial (MCEE), found in Bos taurus (Bovine).